Here is a 148-residue protein sequence, read N- to C-terminus: Protein Turandot Z (148 aa).

A signal peptide spans 1-23 (MYFAIRLSFVLAVLFCLTGNGSA).

The protein belongs to the Turandot family.

Its subcellular location is the secreted. In terms of biological role, a humoral factor that may play a role in stress tolerance. In Drosophila simulans (Fruit fly), this protein is Protein Turandot Z.